Reading from the N-terminus, the 68-residue chain is Beta-defensin 1 (68 aa).

The signal sequence occupies residues 1–21 (MRTSYLLLFTLCLLLSEIASG). A propeptide spanning residues 22–32 (GNFLTGLGHRS) is cleaved from the precursor. Cystine bridges form between C37/C66, C44/C59, and C49/C67.

Belongs to the beta-defensin family. As to quaternary structure, monomer. Homodimer.

Its subcellular location is the secreted. The protein localises to the membrane. Has bactericidal activity. May act as a ligand for C-C chemokine receptor CCR6. Positively regulates the sperm motility and bactericidal activity in a CCR6-dependent manner. Binds to CCR6 and triggers Ca2+ mobilization in the sperm which is important for its motility. The sequence is that of Beta-defensin 1 (DEFB1) from Gorilla gorilla gorilla (Western lowland gorilla).